The primary structure comprises 60 residues: Large ribosomal subunit protein uL30 (60 aa).

The protein belongs to the universal ribosomal protein uL30 family. In terms of assembly, part of the 50S ribosomal subunit.

This chain is Large ribosomal subunit protein uL30, found in Levilactobacillus brevis (strain ATCC 367 / BCRC 12310 / CIP 105137 / JCM 1170 / LMG 11437 / NCIMB 947 / NCTC 947) (Lactobacillus brevis).